A 95-amino-acid polypeptide reads, in one-letter code: Protein TusB (95 aa).

The protein belongs to the DsrH/TusB family. Heterohexamer, formed by a dimer of trimers. The hexameric TusBCD complex contains 2 copies each of TusB, TusC and TusD. The TusBCD complex interacts with TusE.

It localises to the cytoplasm. Part of a sulfur-relay system required for 2-thiolation of 5-methylaminomethyl-2-thiouridine (mnm(5)s(2)U) at tRNA wobble positions. The polypeptide is Protein TusB (Enterobacter sp. (strain 638)).